A 422-amino-acid polypeptide reads, in one-letter code: Serine hydroxymethyltransferase (422 aa).

Residues Leu-118 and 122-124 (GHL) contribute to the (6S)-5,6,7,8-tetrahydrofolate site. The residue at position 227 (Lys-227) is an N6-(pyridoxal phosphate)lysine. (6S)-5,6,7,8-tetrahydrofolate-binding positions include Glu-243 and 351–353 (SPF).

It belongs to the SHMT family. In terms of assembly, homodimer. Pyridoxal 5'-phosphate is required as a cofactor.

The protein localises to the cytoplasm. The enzyme catalyses (6R)-5,10-methylene-5,6,7,8-tetrahydrofolate + glycine + H2O = (6S)-5,6,7,8-tetrahydrofolate + L-serine. Its pathway is one-carbon metabolism; tetrahydrofolate interconversion. It participates in amino-acid biosynthesis; glycine biosynthesis; glycine from L-serine: step 1/1. In terms of biological role, catalyzes the reversible interconversion of serine and glycine with tetrahydrofolate (THF) serving as the one-carbon carrier. This reaction serves as the major source of one-carbon groups required for the biosynthesis of purines, thymidylate, methionine, and other important biomolecules. Also exhibits THF-independent aldolase activity toward beta-hydroxyamino acids, producing glycine and aldehydes, via a retro-aldol mechanism. The protein is Serine hydroxymethyltransferase of Fervidobacterium nodosum (strain ATCC 35602 / DSM 5306 / Rt17-B1).